The chain runs to 127 residues: Fluoride-specific ion channel FluC 1 (127 aa).

3 consecutive transmembrane segments (helical) span residues 6-26 (PLVT…GSNL), 29-49 (FVGL…CGSF), and 95-115 (EWAV…VLVG).

It belongs to the fluoride channel Fluc/FEX (TC 1.A.43) family.

It is found in the cell membrane. It carries out the reaction fluoride(in) = fluoride(out). Functionally, fluoride-specific ion channel. Important for reducing fluoride concentration in the cell, thus reducing its toxicity. The sequence is that of Fluoride-specific ion channel FluC 1 from Haloarcula marismortui (strain ATCC 43049 / DSM 3752 / JCM 8966 / VKM B-1809) (Halobacterium marismortui).